A 573-amino-acid chain; its full sequence is MATLAAPPPPLGESGNSNSVSRITREGKKITYKLNIMQQPKRARACGQGSKSHTDRRPVDPPPVIELNIFESDPHDDSNKTDITFVYNANFFLFATLEPERPIATGKLMTNQGSPVLTGVPVAGVAYLDKPNRAGYFIFPDLSVRNEGSYRFSFHLFEQIKDPKDATEGTQPMPSPVPGKLSSPQEFLEFRLEVISNPFIVYSAKKFPGLTTSTPISRMIAEQGCRVRIRRDVRMRRRGDKRTEDYDYDNERGYNNRRPDQYAGSDAYANAPERPRSTSISTNMDPYSYPSRRPSAVEYGQPIAQPYQRPMASTPAPSSTPIPAPIPMPGPVALPPSTPSPASAHAPAPPSVPLAAPPPLHTPSYQSHLSFGATQTQYPAPQLSHIPQQTTTPTHPYSPRSSISHSRNQSISEYEPSMGYPGSQTRLSAERPSYGQPSQTTSLPPLRHSLEPSVNSRSKTPSNMITSLPPIQSLSELPSTTSQPSSAIGSSPANEPGPRLWETNSMLSKRTYEESFGHDDRPLYNGMRPDSESYPGGMQRRPSYERSSLLDGPDQMAYKRANGRMVSKPATMR.

The segment covering 1–11 has biased composition (pro residues); the sequence is MATLAAPPPPL. Disordered regions lie at residues 1–24 and 39–63; these read MATL…SRIT and QPKR…DPPP. Residues 27–230 form the Velvet domain; it reads GKKITYKLNI…AEQGCRVRIR (204 aa). The Nuclear localization signal signature appears at 41 to 46; sequence KRARAC. Phosphothreonine occurs at positions 167 and 170. Serine 183 bears the Phosphoserine mark. Disordered regions lie at residues 236 to 295, 307 to 367, and 384 to 573; these read RRRG…RRPS, YQRP…SYQS, and SHIP…ATMR. The span at 241–260 shows a compositional bias: basic and acidic residues; the sequence is KRTEDYDYDNERGYNNRRPD. Tyrosine 254 is modified (phosphotyrosine). Pro residues-rich tracts occupy residues 318–339 and 347–361; these read SSTP…PSTP and PAPP…PPLH. Residues 387-412 are compositionally biased toward low complexity; sequence PQQTTTPTHPYSPRSSISHSRNQSIS. Polar residues predominate over residues 452-493; the sequence is PSVNSRSKTPSNMITSLPPIQSLSELPSTTSQPSSAIGSSPA. A PEST region spans residues 459-498; the sequence is KTPSNMITSLPPIQSLSELPSTTSQPSSAIGSSPANEPGP. Basic and acidic residues predominate over residues 510–522; it reads RTYEESFGHDDRP.

This sequence belongs to the velvet family. VeA subfamily. As to quaternary structure, component of the heterotrimeric velvet complex composed of laeA, veA and velB; VeA acting as a bridging protein between laeA and velB. Interacts with the light-sensing phytochrome fphA. Interacts with llmF. Post-translationally, phosphorylated at Thr-167, Thr-170, Ser-183 and Tyr-254. Thr-167 should be phosphorylated and T170 and S183 should be dephosphorylated to achieve light induction of conidiation. Phosphorylation of Ser-183 and Tyr-254 influence sterigmatocystin production in a light-independent manner. Phosphorylation of Thr-167 and Thr-170 modulates expression of veA.

Its subcellular location is the nucleus. It localises to the cytoplasm. Functionally, component of the velvet transcription factor complex that controls sexual/asexual developmental ratio in response to light, promoting sexual development in the darkness while stimulating asexual sporulation under illumination. The velvet complex acts as a global regulator for secondary metabolite gene expression. Controls the expression of the sterigmatocystin and penicillin gene clusters. Represses the cryptic ors gene cluster producing orsellinic acid and its F9775 derivatives in a laeA-independent manner. Required for full induction of faoA gene expression by fructosyl amines. Positively regulates the expression of the early sexual development gene esdC. Controls the expression of mannoprotein mnpA. This chain is Developmental and secondary metabolism regulator veA, found in Emericella nidulans (strain FGSC A4 / ATCC 38163 / CBS 112.46 / NRRL 194 / M139) (Aspergillus nidulans).